Reading from the N-terminus, the 156-residue chain is Small ribosomal subunit protein uS15 (156 aa).

The segment at methionine 1–valine 67 is disordered. A compositionally biased stretch (basic and acidic residues) spans glycine 10–alanine 19. Positions glutamate 21–alanine 32 are enriched in acidic residues.

This sequence belongs to the universal ribosomal protein uS15 family. As to quaternary structure, part of the 30S ribosomal subunit.

The sequence is that of Small ribosomal subunit protein uS15 from Haloarcula marismortui (strain ATCC 43049 / DSM 3752 / JCM 8966 / VKM B-1809) (Halobacterium marismortui).